The following is a 74-amino-acid chain: Large ribosomal subunit protein bL27c (74 aa).

It belongs to the bacterial ribosomal protein bL27 family.

Its subcellular location is the plastid. It localises to the chloroplast. This is Large ribosomal subunit protein bL27c (rpl27) from Pleurochrysis haptonemofera (Unicellular marine alga).